A 184-amino-acid polypeptide reads, in one-letter code: Flavin prenyltransferase UbiX (184 aa).

FMN-binding positions include 9–11 (GAS), serine 34, 85–88 (SMKT), and arginine 120. Positions 150 and 166 each coordinate dimethylallyl phosphate.

The protein belongs to the UbiX/PAD1 family.

It catalyses the reaction dimethylallyl phosphate + FMNH2 = prenylated FMNH2 + phosphate. Its function is as follows. Flavin prenyltransferase that catalyzes the synthesis of the prenylated FMN cofactor (prenyl-FMN) for 4-hydroxy-3-polyprenylbenzoic acid decarboxylase UbiD. The prenyltransferase is metal-independent and links a dimethylallyl moiety from dimethylallyl monophosphate (DMAP) to the flavin N5 and C6 atoms of FMN. In Methanocaldococcus jannaschii (strain ATCC 43067 / DSM 2661 / JAL-1 / JCM 10045 / NBRC 100440) (Methanococcus jannaschii), this protein is Flavin prenyltransferase UbiX.